The chain runs to 205 residues: Meiotic nuclear division protein 1 homolog (205 aa).

At Ser2 the chain carries N-acetylserine. The stretch at 83-173 forms a coiled coil; sequence KRKLEVLDSQ…EAANRWTDNI (91 aa).

It belongs to the MND1 family. As to quaternary structure, heterodimer with PSMC3IP/HOP2. MND1-PSMC3IP interacts with DMC1 and RAD51 and binds preferentially to dsDNA.

It is found in the nucleus. In terms of biological role, required for proper homologous chromosome pairing and efficient cross-over and intragenic recombination during meiosis. Stimulates both DMC1- and RAD51-mediated homologous strand assimilation, which is required for the resolution of meiotic double-strand breaks. The sequence is that of Meiotic nuclear division protein 1 homolog from Bos taurus (Bovine).